A 22-amino-acid chain; its full sequence is Large ribosomal subunit protein bL32 (22 aa).

The tract at residues Cys-1 to Thr-22 is disordered.

The protein belongs to the bacterial ribosomal protein bL32 family.

The polypeptide is Large ribosomal subunit protein bL32 (rpmF) (Brevundimonas vesicularis (Pseudomonas vesicularis)).